The chain runs to 403 residues: D-galactonate dehydratase family member Mmwyl1_0037 (403 aa).

2 residues coordinate substrate: Asn37 and His122. The Proton donor/acceptor role is filled by Tyr159. Asp211 is a Mg(2+) binding site. His213 serves as the catalytic Proton donor/acceptor. 2 residues coordinate Mg(2+): Glu237 and Glu263. Glu263, Arg284, His313, Asp317, and Glu340 together coordinate substrate.

Belongs to the mandelate racemase/muconate lactonizing enzyme family. GalD subfamily. It depends on Mg(2+) as a cofactor.

It carries out the reaction D-mannonate = 2-dehydro-3-deoxy-D-gluconate + H2O. Its function is as follows. Has low D-mannonate dehydratase activity (in vitro), suggesting that this is not a physiological substrate and that it has no significant role in D-mannonate degradation in vivo. Has no detectable activity with a panel of 70 other acid sugars (in vitro). This chain is D-galactonate dehydratase family member Mmwyl1_0037, found in Marinomonas sp. (strain MWYL1).